The sequence spans 603 residues: Elongation factor 4 (603 aa).

In terms of domain architecture, tr-type G spans 7–191 (DNIRNFSIVA…AIVTRLPPPQ (185 aa)). Residues 19–24 (DHGKST) and 138–141 (NKVD) contribute to the GTP site.

The protein belongs to the TRAFAC class translation factor GTPase superfamily. Classic translation factor GTPase family. LepA subfamily.

The protein localises to the cell inner membrane. The catalysed reaction is GTP + H2O = GDP + phosphate + H(+). Functionally, required for accurate and efficient protein synthesis under certain stress conditions. May act as a fidelity factor of the translation reaction, by catalyzing a one-codon backward translocation of tRNAs on improperly translocated ribosomes. Back-translocation proceeds from a post-translocation (POST) complex to a pre-translocation (PRE) complex, thus giving elongation factor G a second chance to translocate the tRNAs correctly. Binds to ribosomes in a GTP-dependent manner. In Rhodopseudomonas palustris (strain HaA2), this protein is Elongation factor 4.